A 359-amino-acid polypeptide reads, in one-letter code: Tropomodulin-1 (359 aa).

Positions 39–61 (PDNALLPAGLRQKDQTTKAPTGP) are disordered. Residues 39–138 (PDNALLPAGL…CDIAAILGMH (100 aa)) form a tropomyosin-binding region.

It belongs to the tropomodulin family. As to quaternary structure, binds to the N-terminus of tropomyosin and to actin. Interacts with FLII.

Its subcellular location is the cytoplasm. It is found in the cytoskeleton. Blocks the elongation and depolymerization of the actin filaments at the pointed end. The Tmod/TM complex contributes to the formation of the short actin protofilament, which in turn defines the geometry of the membrane skeleton. May play an important role in regulating the organization of actin filaments by preferentially binding to a specific tropomyosin isoform at its N-terminus. This is Tropomodulin-1 (TMOD1) from Bos taurus (Bovine).